A 140-amino-acid chain; its full sequence is Gonadotropin subunit beta-2 (140 aa).

The signal sequence occupies residues 1–23; sequence MSVPASSFLLLCFLMNSFSPAQS. 6 disulfide bridges follow: cysteine 29/cysteine 77, cysteine 43/cysteine 92, cysteine 46/cysteine 130, cysteine 54/cysteine 108, cysteine 58/cysteine 110, and cysteine 113/cysteine 120. A glycan (N-linked (GlcNAc...) asparagine) is linked at asparagine 33.

The protein belongs to the glycoprotein hormones subunit beta family. In terms of assembly, heterodimer of an alpha and a beta chain.

The protein resides in the secreted. Its function is as follows. Involved in gametogenesis and steroidogenesis. The chain is Gonadotropin subunit beta-2 (cgbb) from Ictalurus punctatus (Channel catfish).